The chain runs to 428 residues: 3-phosphoshikimate 1-carboxyvinyltransferase (428 aa).

Residues lysine 23, serine 24, and arginine 28 each coordinate 3-phosphoshikimate. Phosphoenolpyruvate is bound at residue lysine 23. Residues glycine 92 and arginine 120 each contribute to the phosphoenolpyruvate site. 3-phosphoshikimate is bound by residues serine 165, glutamine 167, aspartate 312, and lysine 339. Glutamine 167 is a binding site for phosphoenolpyruvate. The active-site Proton acceptor is aspartate 312. Residues arginine 343 and arginine 384 each coordinate phosphoenolpyruvate.

It belongs to the EPSP synthase family. In terms of assembly, monomer.

The protein resides in the cytoplasm. The enzyme catalyses 3-phosphoshikimate + phosphoenolpyruvate = 5-O-(1-carboxyvinyl)-3-phosphoshikimate + phosphate. It functions in the pathway metabolic intermediate biosynthesis; chorismate biosynthesis; chorismate from D-erythrose 4-phosphate and phosphoenolpyruvate: step 6/7. In terms of biological role, catalyzes the transfer of the enolpyruvyl moiety of phosphoenolpyruvate (PEP) to the 5-hydroxyl of shikimate-3-phosphate (S3P) to produce enolpyruvyl shikimate-3-phosphate and inorganic phosphate. This chain is 3-phosphoshikimate 1-carboxyvinyltransferase, found in Sulfurimonas denitrificans (strain ATCC 33889 / DSM 1251) (Thiomicrospira denitrificans (strain ATCC 33889 / DSM 1251)).